A 360-amino-acid chain; its full sequence is Phospho-N-acetylmuramoyl-pentapeptide-transferase (360 aa).

Transmembrane regions (helical) follow at residues 26-46 (AILSVLTALGLSLWMGPIMIK), 70-90 (GTPTMGGIMILAAISITILLW), 94-114 (SNPYVWAVLTVLLGYGAIGFV), 132-152 (WKYFWQSLIAFVVAFALYAYG), 168-188 (IMPQLGLMYIILTYFVIVGTS), 199-219 (GLAIMPTVLVAAGFAVIAWAT), 236-256 (ASELVVVCTAIVGAGLGFLWF), 263-283 (VFMGDVGSLALGGALGTIAVL), 288-308 (LILVIMGGVFVMETLSVILQV), and 338-358 (VIVRFWIISMVLVLIGLATLK).

The protein belongs to the glycosyltransferase 4 family. MraY subfamily. Mg(2+) is required as a cofactor.

Its subcellular location is the cell inner membrane. The enzyme catalyses UDP-N-acetyl-alpha-D-muramoyl-L-alanyl-gamma-D-glutamyl-meso-2,6-diaminopimeloyl-D-alanyl-D-alanine + di-trans,octa-cis-undecaprenyl phosphate = di-trans,octa-cis-undecaprenyl diphospho-N-acetyl-alpha-D-muramoyl-L-alanyl-D-glutamyl-meso-2,6-diaminopimeloyl-D-alanyl-D-alanine + UMP. Its pathway is cell wall biogenesis; peptidoglycan biosynthesis. Functionally, catalyzes the initial step of the lipid cycle reactions in the biosynthesis of the cell wall peptidoglycan: transfers peptidoglycan precursor phospho-MurNAc-pentapeptide from UDP-MurNAc-pentapeptide onto the lipid carrier undecaprenyl phosphate, yielding undecaprenyl-pyrophosphoryl-MurNAc-pentapeptide, known as lipid I. This chain is Phospho-N-acetylmuramoyl-pentapeptide-transferase, found in Vibrio campbellii (strain ATCC BAA-1116).